A 211-amino-acid polypeptide reads, in one-letter code: SAGA-associated factor 11 homolog 1 (211 aa).

An SGF11-type zinc finger spans residues 115-136 (CTCPNCDRLVAAARFAPHLEKC). The tract at residues 149–211 (RRLATKEGSS…GSKKNNGKTF (63 aa)) is disordered. The span at 157–166 (SSASTSSTST) shows a compositional bias: low complexity. At Ser-187 the chain carries Phosphoserine. Positions 197–211 (SSRNNGSKKNNGKTF) are enriched in low complexity.

The protein belongs to the SGF11 family. Component of some SAGA transcription coactivator-HAT complexes, at least composed of Ada2b, not/nonstop, Pcaf/Gcn5, Sgf11 and Spt3. Within the SAGA complex, Sgf11, e(y)2, and not/nonstop form an additional subcomplex of SAGA called the DUB module (deubiquitination module). Interacts directly with not/nonstop. Interacts with the AMEX complex component xmas-2. Interacts with Cbp80; important for promoter recruitment of Sgf11 that is not associated with the DUB module.

It localises to the nucleus. The protein resides in the nucleoplasm. It is found in the cytoplasm. Its function is as follows. Component of the transcription regulatory histone acetylation (HAT) complex SAGA, a multiprotein complex that activates transcription by remodeling chromatin and mediating histone acetylation and deubiquitination. Within the SAGA complex, participates in a subcomplex that specifically deubiquitinates histone H2B. The SAGA complex is recruited to specific gene promoters by activators, where it is required for transcription. Required for nuclear receptor-mediated transactivation. Binds independently on SAGA to promoters in an RNA-dependent manner. Binds to mRNA and is essential for total mRNA export from the nucleus. Required to counteract heterochromatin silencing. Controls the development of neuronal connectivity in visual system by being required for accurate axon targeting in the optic lobe. Required for expression of ecdysone-induced genes such as br/broad. This Drosophila grimshawi (Hawaiian fruit fly) protein is SAGA-associated factor 11 homolog 1.